A 518-amino-acid chain; its full sequence is Bifunctional purine biosynthesis protein PurH (518 aa).

One can recognise an MGS-like domain in the interval 1-144 (MSKRALISVS…KNHAAVTVVC (144 aa)).

Belongs to the PurH family.

The enzyme catalyses (6R)-10-formyltetrahydrofolate + 5-amino-1-(5-phospho-beta-D-ribosyl)imidazole-4-carboxamide = 5-formamido-1-(5-phospho-D-ribosyl)imidazole-4-carboxamide + (6S)-5,6,7,8-tetrahydrofolate. It catalyses the reaction IMP + H2O = 5-formamido-1-(5-phospho-D-ribosyl)imidazole-4-carboxamide. It functions in the pathway purine metabolism; IMP biosynthesis via de novo pathway; 5-formamido-1-(5-phospho-D-ribosyl)imidazole-4-carboxamide from 5-amino-1-(5-phospho-D-ribosyl)imidazole-4-carboxamide (10-formyl THF route): step 1/1. It participates in purine metabolism; IMP biosynthesis via de novo pathway; IMP from 5-formamido-1-(5-phospho-D-ribosyl)imidazole-4-carboxamide: step 1/1. This is Bifunctional purine biosynthesis protein PurH from Lactococcus lactis subsp. cremoris (strain MG1363).